The following is a 241-amino-acid chain: MNENLQELIPTKLAAAIANPLFPAVDSQLRSGRHIGQEYLDNFAFLADFQNELDMFYRRYNVELIRAPEGFFYLRPKATTLIARSVLSELEMLVGKVLCYLYLSPERLAQQGIFSVQEVYDELLNLADESKLLKAVNQRSSGSDLDKQKLAEKVRAAVNRLRRLGMIHTVGEQNSGKFTISESVFRFGAEVRSGDDPREAQLRLIRDGEAATPDSLSQEKSAVKNDEEIEDELDEGLGEEE.

The segment at 207–241 (DGEAATPDSLSQEKSAVKNDEEIEDELDEGLGEEE) is disordered. A compositionally biased stretch (acidic residues) spans 227 to 241 (EEIEDELDEGLGEEE).

The protein belongs to the MukE family. As to quaternary structure, interacts, and probably forms a ternary complex, with MukF and MukB. The complex formation is stimulated by calcium or magnesium.

It is found in the cytoplasm. Its subcellular location is the nucleoid. Functionally, involved in chromosome condensation, segregation and cell cycle progression. May participate in facilitating chromosome segregation by condensation DNA from both sides of a centrally located replisome during cell division. Probably acts via its interaction with MukB and MukF. The sequence is that of Chromosome partition protein MukE from Mannheimia succiniciproducens (strain KCTC 0769BP / MBEL55E).